We begin with the raw amino-acid sequence, 201 residues long: Myelomonocytic growth factor (201 aa).

The first 23 residues, 1 to 23, serve as a signal peptide directing secretion; the sequence is MCCLTPVLALALVLGAPWQALHG. 2 cysteine pairs are disulfide-bonded: cysteine 61–cysteine 67 and cysteine 89–cysteine 99. Residues asparagine 123 and asparagine 137 are each glycosylated (N-linked (GlcNAc...) asparagine).

The protein belongs to the IL-6 superfamily.

Its subcellular location is the secreted. Functionally, hematopoietic growth factor that stimulates the proliferation and colony formation of normal and transformed avian cells of the myeloid lineage. The polypeptide is Myelomonocytic growth factor (Gallus gallus (Chicken)).